We begin with the raw amino-acid sequence, 226 residues long: ATP synthase F(0) complex subunit a (226 aa).

The next 6 helical transmembrane spans lie at 12-32 (PTMM…ILFP), 68-88 (WTLM…LGLL), 97-117 (QLSM…FMGF), 135-155 (IFLI…QPMA), 164-184 (ITAG…LMDI), and 189-209 (ALIT…VAMI).

Belongs to the ATPase A chain family. As to quaternary structure, component of the ATP synthase complex composed at least of ATP5F1A/subunit alpha, ATP5F1B/subunit beta, ATP5MC1/subunit c (homooctomer), MT-ATP6/subunit a, MT-ATP8/subunit 8, ATP5ME/subunit e, ATP5MF/subunit f, ATP5MG/subunit g, ATP5MK/subunit k, ATP5MJ/subunit j, ATP5F1C/subunit gamma, ATP5F1D/subunit delta, ATP5F1E/subunit epsilon, ATP5PF/subunit F6, ATP5PB/subunit b, ATP5PD/subunit d, ATP5PO/subunit OSCP. ATP synthase complex consists of a soluble F(1) head domain (subunits alpha(3) and beta(3)) - the catalytic core - and a membrane F(0) domain - the membrane proton channel (subunits c, a, 8, e, f, g, k and j). These two domains are linked by a central stalk (subunits gamma, delta, and epsilon) rotating inside the F1 region and a stationary peripheral stalk (subunits F6, b, d, and OSCP). Interacts with DNAJC30; interaction is direct.

The protein localises to the mitochondrion inner membrane. It catalyses the reaction H(+)(in) = H(+)(out). In terms of biological role, subunit a, of the mitochondrial membrane ATP synthase complex (F(1)F(0) ATP synthase or Complex V) that produces ATP from ADP in the presence of a proton gradient across the membrane which is generated by electron transport complexes of the respiratory chain. ATP synthase complex consist of a soluble F(1) head domain - the catalytic core - and a membrane F(1) domain - the membrane proton channel. These two domains are linked by a central stalk rotating inside the F(1) region and a stationary peripheral stalk. During catalysis, ATP synthesis in the catalytic domain of F(1) is coupled via a rotary mechanism of the central stalk subunits to proton translocation. With the subunit c (ATP5MC1), forms the proton-conducting channel in the F(0) domain, that contains two crucial half-channels (inlet and outlet) that facilitate proton movement from the mitochondrial intermembrane space (IMS) into the matrix. Protons are taken up via the inlet half-channel and released through the outlet half-channel, following a Grotthuss mechanism. This Equus asinus (Donkey) protein is ATP synthase F(0) complex subunit a.